The following is a 109-amino-acid chain: Flagellar hook-basal body complex protein FliE (109 aa).

This sequence belongs to the FliE family.

It is found in the bacterial flagellum basal body. In Pseudomonas savastanoi pv. phaseolicola (strain 1448A / Race 6) (Pseudomonas syringae pv. phaseolicola (strain 1448A / Race 6)), this protein is Flagellar hook-basal body complex protein FliE.